The following is a 261-amino-acid chain: NAD-capped RNA hydrolase NudC (261 aa).

Substrate-binding residues include Lys25 and Arg69. Cys98 and Cys101 together coordinate Zn(2+). Glu111 contacts substrate. Zn(2+) is bound by residues Cys116 and Cys119. Position 124 (Tyr124) interacts with substrate. One can recognise a Nudix hydrolase domain in the interval 125-248 (PQIAPCVIVA…TVARRLIEDT (124 aa)). 3 residues coordinate a divalent metal cation: Ala158, Glu174, and Glu178. Positions 159-180 (GFVEVGETLEQAVSREVLEESN) match the Nudix box motif. 192–199 (QPWPFPHS) lines the substrate pocket. An a divalent metal cation-binding site is contributed by Glu219. Position 241 (Ala241) interacts with substrate.

This sequence belongs to the Nudix hydrolase family. NudC subfamily. In terms of assembly, homodimer. Mg(2+) serves as cofactor. Mn(2+) is required as a cofactor. Requires Zn(2+) as cofactor.

The enzyme catalyses a 5'-end NAD(+)-phospho-ribonucleoside in mRNA + H2O = a 5'-end phospho-adenosine-phospho-ribonucleoside in mRNA + beta-nicotinamide D-ribonucleotide + 2 H(+). It carries out the reaction NAD(+) + H2O = beta-nicotinamide D-ribonucleotide + AMP + 2 H(+). The catalysed reaction is NADH + H2O = reduced beta-nicotinamide D-ribonucleotide + AMP + 2 H(+). Functionally, mRNA decapping enzyme that specifically removes the nicotinamide adenine dinucleotide (NAD) cap from a subset of mRNAs by hydrolyzing the diphosphate linkage to produce nicotinamide mononucleotide (NMN) and 5' monophosphate mRNA. The NAD-cap is present at the 5'-end of some mRNAs and stabilizes RNA against 5'-processing. Has preference for mRNAs with a 5'-end purine. Catalyzes the hydrolysis of a broad range of dinucleotide pyrophosphates. The chain is NAD-capped RNA hydrolase NudC from Yersinia enterocolitica serotype O:8 / biotype 1B (strain NCTC 13174 / 8081).